The following is a 256-amino-acid chain: Major prion protein (256 aa).

The signal sequence occupies residues 1 to 24; it reads MVKSHIGSWILVLFVAMWSDVGLC. The tract at residues 25-233 is interaction with GRB2, ERI3 and SYN1; the sequence is KKRPKPGGGW…ESQAYYQRGA (209 aa). The segment at 28–110 is disordered; sequence PKPGGGWNTG…QWNKPSKPKT (83 aa). Repeat copies occupy residues 54 to 62, 63 to 70, 71 to 78, 79 to 86, and 87 to 95. Residues 54–95 are 5 X 8 AA tandem repeats of P-H-G-G-G-W-G-Q; sequence PQGGGGWGQPHGGGWGQPHGGGWGQPHGGGWGQPHGGGGWGQ. A compositionally biased stretch (gly residues) spans 55 to 97; that stretch reads QGGGGWGQPHGGGWGQPHGGGWGQPHGGGWGQPHGGGGWGQGG. Cu(2+)-binding residues include H64, G65, G66, H72, G73, G74, H80, G81, G82, H88, G90, and G91. A disulfide bridge links C182 with C217. 2 N-linked (GlcNAc...) asparagine glycosylation sites follow: N184 and N200. The GPI-anchor amidated alanine moiety is linked to residue A233. Residues 234–256 constitute a propeptide, removed in mature form; it reads SVILFSSPPVILLISFLIFLIVG.

This sequence belongs to the prion family. In terms of assembly, monomer and homodimer. Has a tendency to aggregate into amyloid fibrils containing a cross-beta spine, formed by a steric zipper of superposed beta-strands. Soluble oligomers may represent an intermediate stage on the path to fibril formation. Copper binding may promote oligomerization. Interacts with GRB2, APP, ERI3/PRNPIP and SYN1. Mislocalized cytosolically exposed PrP interacts with MGRN1; this interaction alters MGRN1 subcellular location and causes lysosomal enlargement. Interacts with KIAA1191.

The protein resides in the cell membrane. The protein localises to the golgi apparatus. Its function is as follows. Its primary physiological function is unclear. Has cytoprotective activity against internal or environmental stresses. May play a role in neuronal development and synaptic plasticity. May be required for neuronal myelin sheath maintenance. May play a role in iron uptake and iron homeostasis. Soluble oligomers are toxic to cultured neuroblastoma cells and induce apoptosis (in vitro). Association with GPC1 (via its heparan sulfate chains) targets PRNP to lipid rafts. Also provides Cu(2+) or Zn(2+) for the ascorbate-mediated GPC1 deaminase degradation of its heparan sulfate side chains. This chain is Major prion protein (PRNP), found in Budorcas taxicolor (Golden takin).